The chain runs to 241 residues: Homeobox protein TGIF2LX (241 aa).

Disordered regions lie at residues 1-58 (MEAA…GNLP) and 127-207 (GKGA…ELVS). Over residues 10-39 (ETQSPVQKDSPAKTQSPAQDTSIMSRNNAD) the composition is skewed to polar residues. A DNA-binding region (homeobox; TALE-type) is located at residues 48 to 111 (EHKKKRKGNL…INARRRILPD (64 aa)).

It belongs to the TALE/TGIF homeobox family.

The protein resides in the nucleus. Functionally, may have a transcription role in testis. The chain is Homeobox protein TGIF2LX (TGIF2LX) from Pan paniscus (Pygmy chimpanzee).